A 177-amino-acid polypeptide reads, in one-letter code: Prorelaxin (177 aa).

The signal sequence occupies residues 1-22 (MSCKFVLQLLGFWLLLSQPCRA). Cystine bridges form between Cys-36/Cys-164, Cys-48/Cys-177, and Cys-163/Cys-168. A propeptide spans 64–149 (MTEEAVSSFI…LKSLYLDTLS (86 aa)) (connecting peptide). The disordered stretch occupies residues 80–114 (FDTMPNLSEKPKTALPEGHPSLPEQQQYVPVSSDS). The segment covering 102–114 (PEQQQYVPVSSDS) has biased composition (polar residues).

This sequence belongs to the insulin family. In terms of assembly, heterodimer of a B chain and an A chain linked by two disulfide bonds.

It localises to the secreted. In terms of biological role, relaxin is an ovarian hormone that acts with estrogen to produce dilatation of the birth canal in many mammals. It bears mature young, and allows separation of the pelvic bones. The chain is Prorelaxin (RLN) from Mesocricetus auratus (Golden hamster).